The sequence spans 426 residues: Glutamate-1-semialdehyde 2,1-aminomutase (426 aa).

Lys265 carries the N6-(pyridoxal phosphate)lysine modification.

It belongs to the class-III pyridoxal-phosphate-dependent aminotransferase family. HemL subfamily. In terms of assembly, homodimer. It depends on pyridoxal 5'-phosphate as a cofactor.

The protein resides in the cytoplasm. It catalyses the reaction (S)-4-amino-5-oxopentanoate = 5-aminolevulinate. Its pathway is porphyrin-containing compound metabolism; protoporphyrin-IX biosynthesis; 5-aminolevulinate from L-glutamyl-tRNA(Glu): step 2/2. The polypeptide is Glutamate-1-semialdehyde 2,1-aminomutase (Actinobacillus pleuropneumoniae serotype 3 (strain JL03)).